Consider the following 461-residue polypeptide: Argininosuccinate lyase (461 aa).

The protein belongs to the lyase 1 family. Argininosuccinate lyase subfamily.

The protein resides in the cytoplasm. The catalysed reaction is 2-(N(omega)-L-arginino)succinate = fumarate + L-arginine. The protein operates within amino-acid biosynthesis; L-arginine biosynthesis; L-arginine from L-ornithine and carbamoyl phosphate: step 3/3. This is Argininosuccinate lyase from Limosilactobacillus reuteri subsp. reuteri (strain JCM 1112) (Lactobacillus reuteri).